The chain runs to 248 residues: Urease accessory protein UreG 1 (248 aa).

A compositionally biased stretch (basic and acidic residues) spans 1 to 14; that stretch reads MLPEHHDHGHEHGG. Residues 1–36 form a disordered region; it reads MLPEHHDHGHEHGGNGHGHGHRHQVNFDPTAAEPDP. 53–60 contacts GTP; sequence GPVGSGKT.

It belongs to the SIMIBI class G3E GTPase family. UreG subfamily. Homodimer. UreD, UreF and UreG form a complex that acts as a GTP-hydrolysis-dependent molecular chaperone, activating the urease apoprotein by helping to assemble the nickel containing metallocenter of UreC. The UreE protein probably delivers the nickel.

The protein localises to the cytoplasm. In terms of biological role, facilitates the functional incorporation of the urease nickel metallocenter. This process requires GTP hydrolysis, probably effectuated by UreG. In Saccharopolyspora erythraea (strain ATCC 11635 / DSM 40517 / JCM 4748 / NBRC 13426 / NCIMB 8594 / NRRL 2338), this protein is Urease accessory protein UreG 1.